A 296-amino-acid chain; its full sequence is Immediate early response gene 5-like protein (296 aa).

It belongs to the IER family.

In Xenopus tropicalis (Western clawed frog), this protein is Immediate early response gene 5-like protein (ier5l).